Consider the following 136-residue polypeptide: Histone H3.1t (136 aa).

Positions Met1–Arg43 are disordered. Arg3 bears the Asymmetric dimethylarginine; by PRMT6; alternate mark. Arg3 carries the post-translational modification Citrulline; alternate. Phosphothreonine; by HASPIN is present on Thr4. Lys5 is subject to Allysine; alternate. Residue Lys5 is modified to N6,N6,N6-trimethyllysine; alternate. Position 5 is an N6,N6-dimethyllysine; alternate (Lys5). Lys5 is modified (N6-(2-hydroxyisobutyryl)lysine; alternate). Lys5 carries the N6-(beta-hydroxybutyryl)lysine; alternate modification. Lys5 carries the post-translational modification N6-acetyllysine; alternate. Lys5 is modified (N6-methyllysine; alternate). Gln6 carries the 5-glutamyl dopamine; alternate modification. A 5-glutamyl serotonin; alternate modification is found at Gln6. Position 7 is a phosphothreonine; by PKC (Thr7). Arg9 carries the citrulline; alternate modification. Arg9 bears the Symmetric dimethylarginine; by PRMT5; alternate mark. Lys10 is modified (N6,N6,N6-trimethyllysine; alternate). Residue Lys10 is modified to N6,N6-dimethyllysine; alternate. Lys10 is subject to N6-(2-hydroxyisobutyryl)lysine; alternate. Lys10 is modified (N6-(beta-hydroxybutyryl)lysine; alternate). Position 10 is an N6-acetyllysine; alternate (Lys10). Residue Lys10 is modified to N6-methyllysine; alternate. Lys10 carries the N6-lactoyllysine; alternate modification. An ADP-ribosylserine; alternate modification is found at Ser11. Position 11 is a phosphoserine; alternate; by AURKB, AURKC, RPS6KA3, RPS6KA4 and RPS6KA5 (Ser11). Thr12 is modified (phosphothreonine; by PKC). At Lys15 the chain carries N6-(2-hydroxyisobutyryl)lysine; alternate. Position 15 is an N6-(beta-hydroxybutyryl)lysine; alternate (Lys15). The residue at position 15 (Lys15) is an N6-acetyllysine; alternate. An N6-lactoyllysine; alternate modification is found at Lys15. Lys15 carries the post-translational modification N6-glutaryllysine; alternate. Lys15 carries the post-translational modification N6-succinyllysine; alternate. Citrulline; alternate is present on Arg18. Residue Arg18 is modified to Asymmetric dimethylarginine; by CARM1; alternate. Residues Lys19 and Lys24 each carry the N6-(2-hydroxyisobutyryl)lysine; alternate modification. Residues Lys19 and Lys24 each carry the N6-(beta-hydroxybutyryl)lysine; alternate modification. N6-acetyllysine; alternate occurs at positions 19 and 24. 2 positions are modified to N6-methyllysine; alternate: Lys19 and Lys24. N6-lactoyllysine; alternate occurs at positions 19 and 24. 2 positions are modified to N6-glutaryllysine; alternate: Lys19 and Lys24. N6-butyryllysine; alternate occurs at positions 19 and 24. A Citrulline modification is found at Arg27. Lys28 carries the post-translational modification N6,N6,N6-trimethyllysine; alternate. N6,N6-dimethyllysine; alternate is present on Lys28. At Lys28 the chain carries N6-(2-hydroxyisobutyryl)lysine; alternate. Lys28 is modified (N6-acetyllysine; alternate). Lys28 is subject to N6-methyllysine; alternate. The residue at position 28 (Lys28) is an N6-lactoyllysine; alternate. Lys28 carries the post-translational modification N6-glutaryllysine; alternate. Ser29 bears the ADP-ribosylserine; alternate mark. Ser29 carries the phosphoserine; alternate; by AURKB, AURKC and RPS6KA5 modification. Residue Lys37 is modified to N6,N6,N6-trimethyllysine; alternate. Residue Lys37 is modified to N6,N6-dimethyllysine; alternate. N6-(2-hydroxyisobutyryl)lysine; alternate is present on Lys37. Lys37 carries the N6-acetyllysine; alternate modification. Position 37 is an N6-methyllysine; alternate (Lys37). Residue Lys38 is modified to N6-methyllysine. Position 42 is a phosphotyrosine (Tyr42). Lys57 is subject to N6,N6,N6-trimethyllysine; alternate. Lys57 is subject to N6-(2-hydroxyisobutyryl)lysine; alternate. Lys57 is modified (N6-(beta-hydroxybutyryl)lysine; alternate). At Lys57 the chain carries N6-acetyllysine; alternate. Lys57 is subject to N6-lactoyllysine; alternate. The residue at position 57 (Lys57) is an N6-glutaryllysine; alternate. Lys57 carries the post-translational modification N6-succinyllysine; alternate. Lys57 is subject to N6-methyllysine; by EHMT2; alternate. Ser58 carries the post-translational modification Phosphoserine. N6-(2-hydroxyisobutyryl)lysine; alternate occurs at positions 65 and 80. Residues Lys65 and Lys80 each carry the N6-methyllysine; alternate modification. Lys80 is subject to N6,N6,N6-trimethyllysine; alternate. Lys80 bears the N6,N6-dimethyllysine; alternate mark. Lys80 carries the N6-acetyllysine; alternate modification. Residue Lys80 is modified to N6-lactoyllysine; alternate. Position 80 is an N6-glutaryllysine; alternate (Lys80). Lys80 carries the N6-succinyllysine; alternate modification. Residue Thr81 is modified to Phosphothreonine. Ser87 is modified (phosphoserine). Thr108 is modified (phosphothreonine). N6-acetyllysine; alternate occurs at positions 116 and 123. Residues Lys116 and Lys123 each carry the N6-glutaryllysine; alternate modification. Lys123 bears the N6-(2-hydroxyisobutyryl)lysine; alternate mark. An N6-methyllysine; alternate modification is found at Lys123. Residue Lys123 is modified to N6-succinyllysine; alternate.

The protein belongs to the histone H3 family. The nucleosome is a histone octamer containing two molecules each of H2A, H2B, H3 and H4 assembled in one H3-H4 heterotetramer and two H2A-H2B heterodimers. The octamer wraps approximately 147 bp of DNA. Interacts with TONSL; CHAF1A and CHAF1B. Acetylation is generally linked to gene activation. Acetylation on Lys-10 (H3K9ac) impairs methylation at Arg-9 (H3R8me2s). Acetylation on Lys-19 (H3K18ac) and Lys-24 (H3K24ac) favors methylation at Arg-18 (H3R17me). Acetylation at Lys-123 (H3K122ac) by EP300/p300 plays a central role in chromatin structure: localizes at the surface of the histone octamer and stimulates transcription, possibly by promoting nucleosome instability. Post-translationally, citrullination at Arg-9 (H3R8ci) and/or Arg-18 (H3R17ci) by PADI4 impairs methylation and represses transcription. In terms of processing, asymmetric dimethylation at Arg-18 (H3R17me2a) by CARM1 is linked to gene activation. Symmetric dimethylation at Arg-9 (H3R8me2s) by PRMT5 is linked to gene repression. Asymmetric dimethylation at Arg-3 (H3R2me2a) by PRMT6 is linked to gene repression and is mutually exclusive with H3 Lys-5 methylation (H3K4me2 and H3K4me3). H3R2me2a is present at the 3' of genes regardless of their transcription state and is enriched on inactive promoters, while it is absent on active promoters. Methylation at Lys-5 (H3K4me), Lys-37 (H3K36me) and Lys-80 (H3K79me) are linked to gene activation. Methylation at Lys-5 (H3K4me) facilitates subsequent acetylation of H3 and H4. Methylation at Lys-80 (H3K79me) is associated with DNA double-strand break (DSB) responses and is a specific target for TP53BP1. Methylation at Lys-10 (H3K9me) and Lys-28 (H3K27me) are linked to gene repression. Methylation at Lys-10 (H3K9me) is a specific target for HP1 proteins (CBX1, CBX3 and CBX5) and prevents subsequent phosphorylation at Ser-11 (H3S10ph) and acetylation of H3 and H4. Methylation at Lys-5 (H3K4me) and Lys-80 (H3K79me) require preliminary monoubiquitination of H2B at 'Lys-120'. Methylation at Lys-10 (H3K9me) and Lys-28 (H3K27me) are enriched in inactive X chromosome chromatin. Monomethylation at Lys-57 (H3K56me1) by EHMT2/G9A in G1 phase promotes interaction with PCNA and is required for DNA replication. Post-translationally, phosphorylated at Thr-4 (H3T3ph) by HASPIN during prophase and dephosphorylated during anaphase. Phosphorylation at Ser-11 (H3S10ph) by AURKB is crucial for chromosome condensation and cell-cycle progression during mitosis and meiosis. In addition phosphorylation at Ser-11 (H3S10ph) by RPS6KA4 and RPS6KA5 is important during interphase because it enables the transcription of genes following external stimulation, like mitogens, stress, growth factors or UV irradiation and result in the activation of genes, such as c-fos and c-jun. Phosphorylation at Ser-11 (H3S10ph), which is linked to gene activation, prevents methylation at Lys-10 (H3K9me) but facilitates acetylation of H3 and H4. Phosphorylation at Ser-11 (H3S10ph) by AURKB mediates the dissociation of HP1 proteins (CBX1, CBX3 and CBX5) from heterochromatin. Phosphorylation at Ser-11 (H3S10ph) is also an essential regulatory mechanism for neoplastic cell transformation. Phosphorylated at Ser-29 (H3S28ph) by MAP3K20 isoform 1, RPS6KA5 or AURKB during mitosis or upon ultraviolet B irradiation. Phosphorylation at Thr-7 (H3T6ph) by PRKCB is a specific tag for epigenetic transcriptional activation that prevents demethylation of Lys-5 (H3K4me) by LSD1/KDM1A. At centromeres, specifically phosphorylated at Thr-12 (H3T11ph) from prophase to early anaphase, by DAPK3 and PKN1. Phosphorylation at Thr-12 (H3T11ph) by PKN1 or isoform M2 of PKM (PKM2) is a specific tag for epigenetic transcriptional activation that promotes demethylation of Lys-10 (H3K9me) by KDM4C/JMJD2C. Phosphorylation at Tyr-42 (H3Y41ph) by JAK2 promotes exclusion of CBX5 (HP1 alpha) from chromatin. In terms of processing, ubiquitinated. Lysine deamination at Lys-5 (H3K4all) to form allysine is mediated by LOXL2. Allysine formation by LOXL2 only takes place on H3K4me3 and results in gene repression. Post-translationally, butyrylation of histones marks active promoters and competes with histone acetylation. It is present during late spermatogenesis. In terms of processing, succinylation at Lys-80 (H3K79succ) by KAT2A takes place with a maximum frequency around the transcription start sites of genes. It gives a specific tag for epigenetic transcription activation. Desuccinylation at Lys-123 (H3K122succ) by SIRT7 in response to DNA damage promotes chromatin condensation and double-strand breaks (DSBs) repair. Serine ADP-ribosylation constitutes the primary form of ADP-ribosylation of proteins in response to DNA damage. Serine ADP-ribosylation at Ser-11 (H3S10ADPr) is mutually exclusive with phosphorylation at Ser-11 (H3S10ph) and impairs acetylation at Lys-10 (H3K9ac). In terms of tissue distribution, expressed in testicular cells.

The protein localises to the nucleus. It is found in the chromosome. Functionally, core component of nucleosome. Nucleosomes wrap and compact DNA into chromatin, limiting DNA accessibility to the cellular machineries which require DNA as a template. Histones thereby play a central role in transcription regulation, DNA repair, DNA replication and chromosomal stability. DNA accessibility is regulated via a complex set of post-translational modifications of histones, also called histone code, and nucleosome remodeling. This is Histone H3.1t from Homo sapiens (Human).